Reading from the N-terminus, the 270-residue chain is MLVHPQFDPVAIHLGPLAIRWYGLMYLAGFIMFLWFGRLRIRQPHIAARGWVARDLDDMLFYGVLGVILGGRLGYVLFYKPGYYLTHPLEIFKVWEGGMAFHGGFLGVLIAMWVFAKVRRRHWMEVTDFIAPMIPCGLAAGRIGNFINGELWGRPTDLPWGMIFPQAGDNIPRHPSQLYQFAGEGVALFIILWLFSRKPRPMGAVSGVFLIGYGAFRFLAEFAREPDNFLGLLALKLSMGQWLSLPMIVIGAVMVVWAYRRGNGATAAAR.

7 helical membrane-spanning segments follow: residues 17-37, 59-79, 95-115, 129-149, 175-195, 202-222, and 237-257; these read LAIR…LWFG, MLFY…VLFY, WEGG…MWVF, FIAP…FING, PSQL…LWLF, MGAV…LAEF, and LSMG…MVVW. Arginine 142 is a binding site for a 1,2-diacyl-sn-glycero-3-phospho-(1'-sn-glycerol).

This sequence belongs to the Lgt family.

The protein resides in the cell inner membrane. It carries out the reaction L-cysteinyl-[prolipoprotein] + a 1,2-diacyl-sn-glycero-3-phospho-(1'-sn-glycerol) = an S-1,2-diacyl-sn-glyceryl-L-cysteinyl-[prolipoprotein] + sn-glycerol 1-phosphate + H(+). It participates in protein modification; lipoprotein biosynthesis (diacylglyceryl transfer). Its function is as follows. Catalyzes the transfer of the diacylglyceryl group from phosphatidylglycerol to the sulfhydryl group of the N-terminal cysteine of a prolipoprotein, the first step in the formation of mature lipoproteins. This Cupriavidus metallidurans (strain ATCC 43123 / DSM 2839 / NBRC 102507 / CH34) (Ralstonia metallidurans) protein is Phosphatidylglycerol--prolipoprotein diacylglyceryl transferase.